Here is a 174-residue protein sequence, read N- to C-terminus: CDP-archaeol synthase (174 aa).

5 helical membrane-spanning segments follow: residues 14–34 (ILEA…PVVA), 59–79 (IEGL…AALA), 83–103 (MLLA…DMAG), 118–138 (APLL…IALG), and 149–169 (AAAA…LLGL).

It belongs to the CDP-archaeol synthase family. Mg(2+) is required as a cofactor.

The protein resides in the cell membrane. The enzyme catalyses 2,3-bis-O-(geranylgeranyl)-sn-glycerol 1-phosphate + CTP + H(+) = CDP-2,3-bis-O-(geranylgeranyl)-sn-glycerol + diphosphate. It functions in the pathway membrane lipid metabolism; glycerophospholipid metabolism. In terms of biological role, catalyzes the formation of CDP-2,3-bis-(O-geranylgeranyl)-sn-glycerol (CDP-archaeol) from 2,3-bis-(O-geranylgeranyl)-sn-glycerol 1-phosphate (DGGGP) and CTP. This reaction is the third ether-bond-formation step in the biosynthesis of archaeal membrane lipids. The protein is CDP-archaeol synthase of Aeropyrum pernix (strain ATCC 700893 / DSM 11879 / JCM 9820 / NBRC 100138 / K1).